Reading from the N-terminus, the 537-residue chain is Putative cysteine ligase BshC (537 aa).

Positions 383 to 451 (MERTQKLLKQ…EVKENQDNFN (69 aa)) form a coiled coil.

This sequence belongs to the BshC family.

In terms of biological role, involved in bacillithiol (BSH) biosynthesis. May catalyze the last step of the pathway, the addition of cysteine to glucosamine malate (GlcN-Mal) to generate BSH. The polypeptide is Putative cysteine ligase BshC (Staphylococcus haemolyticus (strain JCSC1435)).